We begin with the raw amino-acid sequence, 271 residues long: Bis(5'-nucleosyl)-tetraphosphatase, symmetrical (271 aa).

The protein belongs to the Ap4A hydrolase family.

The enzyme catalyses P(1),P(4)-bis(5'-adenosyl) tetraphosphate + H2O = 2 ADP + 2 H(+). Functionally, hydrolyzes diadenosine 5',5'''-P1,P4-tetraphosphate to yield ADP. This Aliivibrio fischeri (strain ATCC 700601 / ES114) (Vibrio fischeri) protein is Bis(5'-nucleosyl)-tetraphosphatase, symmetrical.